Consider the following 207-residue polypeptide: C-type lectin domain family 2 member D (207 aa).

The Cytoplasmic segment spans residues 1–41; sequence MCVTKASLPMLSPTGSPQEVEVGKILQGKRHGTISPESCAK. 2 positions are modified to phosphoserine: serine 7 and serine 12. A helical; Signal-anchor for type II membrane protein transmembrane segment spans residues 42–62; that stretch reads LYCYYGVIMVLTVAVIALSVA. The Extracellular portion of the chain corresponds to 63-207; sequence LSATKTEQIP…LHCQTPFFPS (145 aa). A disulfide bond links cysteine 80 and cysteine 91. A C-type lectin domain is found at 87–202; the sequence is VENKCFYFSE…LNSYSLHCQT (116 aa). N-linked (GlcNAc...) asparagine glycosylation is present at asparagine 100.

Homodimer; disulfide-linked. In terms of processing, N-glycosylated. Detected in fetal heart, brain, lung, chondrocytes, perichondrium and osteoblasts, and in adult splenocytes, thymocytes, lymph-node cells, osteoblasts, growth plate chondrocytes and skeletal muscle overlying the bone (at protein level). Ubiquitous. Detected in thymus, bone marrow, lung, gut, heart, skeletal muscle, ovary, spleen, ileum, liver and kidney.

It is found in the cell membrane. Its function is as follows. Receptor for KLRB1B that protects target cells against natural killer cell-mediated lysis. Inhibits osteoclast formation. Binds high molecular weight sulfated glycosaminoglycans. This Mus musculus (Mouse) protein is C-type lectin domain family 2 member D (Clec2d).